The following is a 347-amino-acid chain: Phosphate acyltransferase (347 aa).

The protein belongs to the PlsX family. In terms of assembly, homodimer. Probably interacts with PlsY.

It localises to the cytoplasm. It carries out the reaction a fatty acyl-[ACP] + phosphate = an acyl phosphate + holo-[ACP]. It functions in the pathway lipid metabolism; phospholipid metabolism. Functionally, catalyzes the reversible formation of acyl-phosphate (acyl-PO(4)) from acyl-[acyl-carrier-protein] (acyl-ACP). This enzyme utilizes acyl-ACP as fatty acyl donor, but not acyl-CoA. The polypeptide is Phosphate acyltransferase (Dehalococcoides mccartyi (strain ATCC BAA-2100 / JCM 16839 / KCTC 5957 / BAV1)).